We begin with the raw amino-acid sequence, 497 residues long: 4,4'-diaponeurosporene oxygenase (497 aa).

Position 7-19 (7-19 (VIGGGLGGISAAI)) interacts with FAD.

The protein belongs to the carotenoid/retinoid oxidoreductase family. CrtP subfamily. FAD is required as a cofactor.

The enzyme catalyses all-trans-4,4'-diaponeurosporene + 2 AH2 + 2 O2 = 4,4'-diaponeurosporenal + 2 A + 3 H2O. It participates in carotenoid biosynthesis; staphyloxanthin biosynthesis; staphyloxanthin from farnesyl diphosphate: step 3/5. Its function is as follows. Involved in the biosynthesis of the yellow-orange carotenoid staphyloxanthin, which plays a role in the virulence via its protective function against oxidative stress. Catalyzes the oxidation of the terminal methyl side group of 4,4'-diaponeurosporene to form 4,4'-diaponeurosporen-4-al. The polypeptide is 4,4'-diaponeurosporene oxygenase (Staphylococcus aureus (strain MW2)).